Reading from the N-terminus, the 430-residue chain is MQTTRIAMEDASFPYRLGTDCAEDVVARLAALEASSYLVVADTTVAELYGAALTAHIDKEAGPSHLLTHEVGEVHKTLATVSALAEQALGRGADRRSVVVALGGGVTGNIAGLMASLLFRGIRLVHVPTTVVAMLDSVLSLKQAVNTTFGKNLAGTFYQPVEVLADTAALRTLPPREIRSGMGEVVKNALAIRPAMLDRLAGALRPDTRYDDETMRWIIAESLAAKADVTSGDKHERRSGLVLEYGHTAGHAIEHASRGAVAHGAGVAVGMTLAAEVSRRLGHADAGLVALHRELVAAAGVEPAVPDHVDTALVKNWLAYDNKRGYLDSPPGHTPMVLLSAPGEVLHTGTMPLVPVPLALLEEVVDESAARGGAGGGAAEPAAARTGPVPDGPEAAVPATPGPVPAGPAAAAPLPSGPAPTAPAAAGPVP.

NAD(+) is bound by residues D42, 73–76, 105–109, 129–130, 140–142, and 151–152; these read EVHK, GVTGN, TT, SLK, and KN. K142 is an active-site residue. Position 184 (E184) interacts with Co(2+). E244 is a catalytic residue. Co(2+) contacts are provided by H247 and H263. The segment at 371–430 is disordered; sequence RGGAGGGAAEPAAARTGPVPDGPEAAVPATPGPVPAGPAAAAPLPSGPAPTAPAAAGPVP. Residues 379 to 399 are compositionally biased toward low complexity; sequence AEPAAARTGPVPDGPEAAVPA.

The protein belongs to the sugar phosphate cyclases superfamily. DOI synthase family. NAD(+) serves as cofactor. It depends on Co(2+) as a cofactor.

The catalysed reaction is D-glucose 6-phosphate = 2-deoxy-L-scyllo-inosose + phosphate. The protein operates within metabolic intermediate biosynthesis; 2-deoxystreptamine biosynthesis; 2-deoxystreptamine from D-glucose 6-phosphate: step 1/4. It functions in the pathway antibiotic biosynthesis; neomycin biosynthesis. Catalyzes the intramolecular carbocycle formation from D-glucose-6-phosphate to 2-deoxy-scyllo-inosose (DOI). This Streptomyces fradiae (Streptomyces roseoflavus) protein is 2-deoxy-scyllo-inosose synthase (neoC).